The sequence spans 499 residues: Glutamyl-tRNA(Gln) amidotransferase subunit A, mitochondrial (499 aa).

Residues Lys-61 and Ser-139 each act as charge relay system in the active site. Residue Ser-163 is the Acyl-ester intermediate of the active site.

It belongs to the amidase family. GatA subfamily. As to quaternary structure, subunit of the heterotrimeric GatCAB amidotransferase (AdT) complex, composed of A, B and C subunits.

It localises to the mitochondrion. The catalysed reaction is L-glutamyl-tRNA(Gln) + L-glutamine + ATP + H2O = L-glutaminyl-tRNA(Gln) + L-glutamate + ADP + phosphate + H(+). Functionally, allows the formation of correctly charged Gln-tRNA(Gln) through the transamidation of misacylated Glu-tRNA(Gln) in the mitochondria. The reaction takes place in the presence of glutamine and ATP through an activated gamma-phospho-Glu-tRNA(Gln). The sequence is that of Glutamyl-tRNA(Gln) amidotransferase subunit A, mitochondrial from Coccidioides posadasii (strain C735) (Valley fever fungus).